The following is a 161-amino-acid chain: Phosphopantetheine adenylyltransferase (161 aa).

Residue threonine 10 participates in substrate binding. ATP-binding positions include threonine 10–phenylalanine 11 and histidine 18. Substrate-binding residues include lysine 42, leucine 75, and arginine 89. Residues glycine 90–arginine 92, glutamate 100, and tyrosine 125–serine 131 contribute to the ATP site.

This sequence belongs to the bacterial CoaD family. As to quaternary structure, homohexamer. It depends on Mg(2+) as a cofactor.

The protein localises to the cytoplasm. The catalysed reaction is (R)-4'-phosphopantetheine + ATP + H(+) = 3'-dephospho-CoA + diphosphate. It participates in cofactor biosynthesis; coenzyme A biosynthesis; CoA from (R)-pantothenate: step 4/5. Its function is as follows. Reversibly transfers an adenylyl group from ATP to 4'-phosphopantetheine, yielding dephospho-CoA (dPCoA) and pyrophosphate. This chain is Phosphopantetheine adenylyltransferase, found in Thermodesulfovibrio yellowstonii (strain ATCC 51303 / DSM 11347 / YP87).